Consider the following 138-residue polypeptide: Secreted RxLR effector protein 51 (138 aa).

The signal sequence occupies residues 1 to 19 (MRSSTILFVLGVAMVAVNG). Residues 38–53 (RLLRSNSGKHKTDEER) carry the RxLR-dEER motif. Residue asparagine 101 is glycosylated (N-linked (GlcNAc...) asparagine).

Belongs to the RxLR effector family.

It localises to the secreted. The protein resides in the host nucleus. Its function is as follows. Secreted effector that completely suppresses the host cell death induced by cell death-inducing proteins. The polypeptide is Secreted RxLR effector protein 51 (Plasmopara viticola (Downy mildew of grapevine)).